We begin with the raw amino-acid sequence, 31 residues long: Cyclotide psybry A (31 aa).

The segment at residues 1–31 is a cross-link (cyclopeptide (Gly-Asn)); sequence GFNPCGETCIWFPTCHAPGCTCSIANICVRN. Intrachain disulfides connect Cys-5/Cys-20, Cys-9/Cys-22, and Cys-15/Cys-28.

This is a cyclic peptide.

Its function is as follows. Probably participates in a plant defense mechanism. This is Cyclotide psybry A from Psychotria brachyceras.